A 503-amino-acid polypeptide reads, in one-letter code: Transmembrane protein 184C (503 aa).

7 helical membrane-spanning segments follow: residues 17 to 37 (LLIL…IWEF), 48 to 68 (VWFI…CGIL), 83 to 103 (IIRI…ALKY), 115 to 135 (ECYE…YLTI), 212 to 232 (YLVI…LLFY), 254 to 274 (VVFV…VGVI), and 287 to 307 (AVAT…AAIA). Disordered stretches follow at residues 358 to 391 (PKKK…SPVG) and 479 to 503 (SPKP…STDS). Positions 373–388 (SSLLSASSQDSSKPSS) are enriched in low complexity. A compositionally biased stretch (polar residues) spans 494–503 (PEGSDSSTDS).

The protein belongs to the TMEM184 family.

The protein resides in the membrane. Functionally, possible tumor suppressor which may play a role in cell growth. The protein is Transmembrane protein 184C (Tmem184c) of Rattus norvegicus (Rat).